Reading from the N-terminus, the 624-residue chain is Probable potassium transport system protein Kup 1 (624 aa).

Helical transmembrane passes span 10–30, 48–68, 94–114, 133–153, 159–179, 210–230, 242–262, 270–290, 331–351, 363–383, 388–408, and 413–433; these read LALG…LYAL, LSLI…MIIF, PLFY…GMLT, LYPY…SLQA, IGYL…ILGI, LLLG…ADIG, FFAA…NLIV, PFFM…ATVA, IYVP…CLAF, IAVN…AISI, IFNV…FLGA, and FITG…IMYS.

This sequence belongs to the HAK/KUP transporter (TC 2.A.72) family.

The protein localises to the cell inner membrane. It catalyses the reaction K(+)(in) + H(+)(in) = K(+)(out) + H(+)(out). Transport of potassium into the cell. Likely operates as a K(+):H(+) symporter. This chain is Probable potassium transport system protein Kup 1, found in Legionella pneumophila (strain Lens).